We begin with the raw amino-acid sequence, 889 residues long: Potassium/sodium hyperpolarization-activated cyclic nucleotide-gated channel 2 (889 aa).

Gly residues predominate over residues 1 to 10 (MDARGGGGRP). Residues 1-159 (MDARGGGGRP…GPAGEPRGSQ (159 aa)) are disordered. The Cytoplasmic portion of the chain corresponds to 1–215 (MDARGGGGRP…PYSDFRFYWD (215 aa)). The segment covering 17–55 (TPAPGPPPPPPPAPPQQQPPPPPPPAPPPGPGPAPPQHP) has biased composition (pro residues). A compositionally biased stretch (low complexity) spans 129-155 (GAASGPAPGPGPAEEAGSEEAGPAGEP). Ser-146 and Ser-161 each carry phosphoserine. Positions 158 to 209 (SQASFMQRQFGALLQPGVNKFSLRMFGSQKAVEREQERVKSAGAWIIHPYSD) are involved in subunit assembly. Residues 216–236 (FTMLLFMVGNLIIIPVGITFF) form a helical membrane-spanning segment. Residues 237–240 (KDET) lie on the Extracellular side of the membrane. Residues 241 to 261 (TAPWIVFNVVSDTFFLMDLVL) traverse the membrane as a helical segment. Topologically, residues 262 to 288 (NFRTGIVIEDNTEIILDPEKIKKKYLR) are cytoplasmic. A helical membrane pass occupies residues 289 to 309 (TWFVVDFVSSIPVDYIFLIVE). At 310-317 (KGIDSEVY) the chain is on the extracellular side. Residues 318–338 (KTARALRIVRFTKILSLLRLL) traverse the membrane as a helical; Voltage-sensor segment. At 339-369 (RLSRLIRYIHQWEEIFHMTYDLASAVMRICN) the chain is on the cytoplasmic side. The helical transmembrane segment at 370-390 (LISMMLLLCHWDGCLQFLVPM) threads the bilayer. Topologically, residues 391 to 413 (LQDFPRNCWVSINGMVNHSWSEL) are extracellular. Asn-407 is a glycosylation site (N-linked (GlcNAc...) asparagine). An intramembrane region (pore-forming) is located at residues 414–435 (YSFALFKAMSHMLCIGYGRQAP). Residues 436-440 (ESMTD) lie on the Extracellular side of the membrane. A helical membrane pass occupies residues 441 to 461 (IWLTMLSMIVGATCYAMFIGH). At 462–889 (ATALIQSLDS…SARSRLSSNL (428 aa)) the chain is on the cytoplasmic side. Residues Met-599, Gly-608, Glu-609, Ile-610, Cys-611, Arg-618, Thr-619, and Arg-659 each coordinate 3',5'-cyclic AMP. The residue at position 668 (Ser-668) is a Phosphoserine; by PKG/PRKG2. A Phosphoserine modification is found at Ser-754. The segment at 754–889 (SPRLVRRPPP…SARSRLSSNL (136 aa)) is disordered. Position 756 is an omega-N-methylarginine (Arg-756). Pro residues predominate over residues 760–784 (RPPPGPAPAAASPGPPPPASPPGAP). 5 positions are modified to phosphoserine: Ser-771, Ser-779, Ser-786, Ser-866, and Ser-868. Positions 785–860 (ASPRAPRTSP…TPAARAAAPS (76 aa)) are enriched in low complexity.

The protein belongs to the potassium channel HCN family. In terms of assembly, homotetramer. The channel is composed of a homo- or heterotetrameric complex of pore-forming subunits. Heterotetramer with HCN1. Forms an obligate 4:4 complex with accessory subunit PEX5L. Interacts with KCNE2. Phosphorylation at Ser-668 by PRKG2 shifts the voltage-dependence to more negative voltages, hence counteracting the stimulatory effect of cGMP on gating. In terms of processing, S-palmitoylated. Post-translationally, N-glycosylated; required for cell surface trafficking of HCN2. In terms of tissue distribution, highly expressed throughout the brain. Detected at low levels in heart.

The protein localises to the cell membrane. The catalysed reaction is Na(+)(in) = Na(+)(out). It carries out the reaction K(+)(in) = K(+)(out). It catalyses the reaction NH4(+)(in) = NH4(+)(out). Activated by cAMP, and at 10-100 times higher concentrations, also by cGMP. cAMP binding causes a conformation change that leads to the assembly of an active tetramer and channel opening. Binding of cAMP removes a tonic inhibition conferred by cyclic nucleotide-binding domain (CNBD) on channel opening. Channel activity is modulated by intracellular chloride ions and pH; acidic pH shifts the activation to more negative voltages. Inhibited by extracellular cesium ions. Functionally, hyperpolarization-activated ion channel that is permeable to sodium and potassium ions. Displays lower selectivity for K(+) over Na(+) ions. Contributes to the native pacemaker currents in heart (If) and in neurons (Ih). Can also transport ammonium in the distal nephron. Involved in the initiation of neuropathic pain in sensory neurons. The chain is Potassium/sodium hyperpolarization-activated cyclic nucleotide-gated channel 2 from Homo sapiens (Human).